A 307-amino-acid polypeptide reads, in one-letter code: uncharacterized protein (307 aa).

This is an uncharacterized protein from Caenorhabditis elegans.